Consider the following 236-residue polypeptide: Urease accessory protein UreF (236 aa).

It belongs to the UreF family. UreD, UreF and UreG form a complex that acts as a GTP-hydrolysis-dependent molecular chaperone, activating the urease apoprotein by helping to assemble the nickel containing metallocenter of UreC. The UreE protein probably delivers the nickel.

Its subcellular location is the cytoplasm. Required for maturation of urease via the functional incorporation of the urease nickel metallocenter. The chain is Urease accessory protein UreF from Granulibacter bethesdensis (strain ATCC BAA-1260 / CGDNIH1).